A 156-amino-acid chain; its full sequence is uncharacterized protein (156 aa).

The next 2 membrane-spanning stretches (helical) occupy residues 46–66 (GLVL…AGVV) and 114–134 (IIDI…IVAL).

It localises to the cell membrane. This is an uncharacterized protein from Haemophilus influenzae (strain ATCC 51907 / DSM 11121 / KW20 / Rd).